Consider the following 237-residue polypeptide: Phosphoadenosine 5'-phosphosulfate reductase (237 aa).

Cysteine 231 acts as the Nucleophile; cysteine thiosulfonate intermediate in catalysis.

It belongs to the PAPS reductase family. CysH subfamily.

The protein resides in the cytoplasm. It carries out the reaction [thioredoxin]-disulfide + sulfite + adenosine 3',5'-bisphosphate + 2 H(+) = [thioredoxin]-dithiol + 3'-phosphoadenylyl sulfate. It functions in the pathway sulfur metabolism; hydrogen sulfide biosynthesis; sulfite from sulfate: step 3/3. Its function is as follows. Catalyzes the formation of sulfite from phosphoadenosine 5'-phosphosulfate (PAPS) using thioredoxin as an electron donor. The polypeptide is Phosphoadenosine 5'-phosphosulfate reductase (Xylella fastidiosa (strain M23)).